The following is a 167-amino-acid chain: Endoribonuclease YbeY (167 aa).

Residues 64-101 (GKPTNVLSWPSEERASEEPGMAPEPPEPGDPEDPEPLG) are disordered. Positions 90-99 (EPGDPEDPEP) are enriched in acidic residues. Residues H131, H135, and H141 each contribute to the Zn(2+) site.

The protein belongs to the endoribonuclease YbeY family. It depends on Zn(2+) as a cofactor.

It localises to the cytoplasm. Its function is as follows. Single strand-specific metallo-endoribonuclease involved in late-stage 70S ribosome quality control and in maturation of the 3' terminus of the 16S rRNA. The protein is Endoribonuclease YbeY of Cereibacter sphaeroides (strain ATCC 17023 / DSM 158 / JCM 6121 / CCUG 31486 / LMG 2827 / NBRC 12203 / NCIMB 8253 / ATH 2.4.1.) (Rhodobacter sphaeroides).